The following is a 1010-amino-acid chain: Signal peptide, CUB and EGF-like domain-containing protein 2 (1010 aa).

A signal peptide spans 1 to 24 (MGAVWTVRLLCLFLLLLNTRQSAA). Positions 28–68 (NTDQCAEGSDACHIDAICQNTPTSYKCTCKTGFKGDGKHCE) constitute an EGF-like 1; calcium-binding domain. Disulfide bonds link C32/C45, C39/C54, C56/C67, C73/C85, C81/C94, C96/C109, C115/C126, and C122/C135. The EGF-like 2; calcium-binding domain maps to 69–110 (DIDECDVEYNGGCVHECNNIPGNYRCTCLDGFHLAHDGHNCL). Positions 111-147 (DVDECVFNNGGCQHVCVNTMGSYECRCKQGFFLSDNQ) constitute an EGF-like 3; calcium-binding domain. 2 EGF-like domains span residues 160–196 (CMNK…QRGC) and 200–235 (CNHG…GRTC). Residue N249 is glycosylated (N-linked (GlcNAc...) asparagine). Positions 269–304 (CAVNNGGCDSTCKDTSTGVRCSCPVGFTLQPDGKSC) constitute an EGF-like 6 domain. In terms of domain architecture, EGF-like 7; calcium-binding spans 306-346 (DIDECELHNGGCDHYCRNTIGSFECSCRKGFKLLTDERSCQ). Intrachain disulfides connect C310–C321, C317–C330, C332–C345, C351–C361, C357–C370, C372–C384, C390–C401, C397–C410, and C412–C425. One can recognise an EGF-like 8; calcium-binding domain in the interval 347–385 (DIDECFFERTCDHTCVNSPGSFQCVCNKGYTLYGLAHCG). The EGF-like 9; calcium-binding domain occupies 386–426 (DINECSFNNGGCEHTCENTMGSFGCHCRAGYKLHWNKKDCI). N-linked (GlcNAc...) asparagine glycosylation is found at N488, N703, N774, and N803. C822 and C848 are disulfide-bonded. Residues 822-934 (CGGELGEFTG…KGFQVPYVTY (113 aa)) enclose the CUB domain. The tract at residues 860–869 (ILVVVPEIYL) is interaction with the cholesterol-anchor of SHH. Residues C875 and C896 are joined by a disulfide bond. An N-linked (GlcNAc...) asparagine glycan is attached at N982.

Interacts with SHH via the cholesterol anchor of the dually lipid-modified SHH (ShhNp). Interacts with PTCH1. Forms homooligomers and heterooligomers with SCUBE1 and SCUBE3. Interacts with VEGFR2. N-glycosylated.

It localises to the secreted. The protein resides in the cell surface. Functionally, lipid-binding protein required for SHH long-range signaling by binding to the dually lipid-modified SHH (ShhNp) and by promoting ShhNp mobilization, solubilization and release from the cell membrane. Acts by enhancing the proteolytic processing (shedding) of the lipid-modified N- and C- terminal of ShhNp at the cell surface. Synergizes with DISP1 to cause an increase in SHH secretion. Probable cell surface coreceptor for VEGFR2 involved in VEGFR2-mediated angiogenesis. This is Signal peptide, CUB and EGF-like domain-containing protein 2 (scube2) from Danio rerio (Zebrafish).